We begin with the raw amino-acid sequence, 392 residues long: Na(+)/H(+) antiporter NhaA 2 (392 aa).

Transmembrane regions (helical) follow at residues 20-40 (FFAA…AALI), 63-83 (VEHW…GLEI), 99-119 (ALPG…YVAF), 127-147 (IGGW…VLSL), 158-178 (IFLS…IALF), 181-201 (SDLS…LVAL), 209-229 (LLPY…SGIH), 265-285 (VAFA…LSGI), 298-318 (VALG…ALAI), 336-356 (GVAA…ALAF), and 365-385 (EVKV…VVVL).

Belongs to the NhaA Na(+)/H(+) (TC 2.A.33) antiporter family.

It localises to the cell inner membrane. It carries out the reaction Na(+)(in) + 2 H(+)(out) = Na(+)(out) + 2 H(+)(in). Functionally, na(+)/H(+) antiporter that extrudes sodium in exchange for external protons. This Pseudomonas savastanoi pv. phaseolicola (strain 1448A / Race 6) (Pseudomonas syringae pv. phaseolicola (strain 1448A / Race 6)) protein is Na(+)/H(+) antiporter NhaA 2.